A 434-amino-acid chain; its full sequence is Innexin-14 (434 aa).

Transmembrane regions (helical) follow at residues 30 to 50 (LFTV…QHFG), 106 to 126 (WVPF…WCWA), 301 to 321 (IFIG…IGTV), and 365 to 385 (YLCA…GFLK).

It belongs to the pannexin family.

Its subcellular location is the cell membrane. The protein resides in the cell junction. The protein localises to the gap junction. Structural component of the gap junctions. The sequence is that of Innexin-14 (inx-14) from Caenorhabditis elegans.